Here is a 111-residue protein sequence, read N- to C-terminus: Iron-sulfur cluster insertion protein ErpA (111 aa).

3 residues coordinate iron-sulfur cluster: cysteine 39, cysteine 103, and cysteine 105.

The protein belongs to the HesB/IscA family. As to quaternary structure, homodimer. Iron-sulfur cluster serves as cofactor.

Required for insertion of 4Fe-4S clusters for at least IspG. This Acinetobacter baumannii (strain AB307-0294) protein is Iron-sulfur cluster insertion protein ErpA.